Consider the following 133-residue polypeptide: MARKKEFRYRGYTLDELLNMSLEEFAKLLPSRQRRSLKRGLSPEQKKLLRKIRLAKKGKYNKPIRTHSRDMIVLPEMVGMTIHVYNGKEFVPVEIKEEMIGHYLGEFAMTRKVVQHGSPGVGATRSSMFVAVK.

Belongs to the universal ribosomal protein uS19 family. In terms of assembly, part of the 30S ribosomal subunit.

Its function is as follows. Protein S19 forms a complex with S13 that binds strongly to the 16S ribosomal RNA. The chain is Small ribosomal subunit protein uS19 from Thermococcus kodakarensis (strain ATCC BAA-918 / JCM 12380 / KOD1) (Pyrococcus kodakaraensis (strain KOD1)).